A 294-amino-acid chain; its full sequence is MNNIFKGLITAIITPFRDNKLDLNALEKILEYQINAEVNAVVIAGSTGEGSSLSFEEYKLLLQTAKDIVNKRIPVISGCSSNNTACAIELAAESTKIGVDGFMISPPSYLKPTQGGIYKHFEAIHEASNLPIMLYSVPSRTGVDFTDETILKLSKLSRILALKDAGIDLERPLRIKSVINKELNLLCGNDDLSLAFNAQGGVGCVSVASNITPKLCKELQEKWHNNDVKGALGIHQRLLPLYKALFVESNPIPVKYAMYYLGFCTNEIRLPLTEATDTTKKQIEEIITSLSIKV.

Thr47 contacts pyruvate. The active-site Proton donor/acceptor is the Tyr135. Lys163 serves as the catalytic Schiff-base intermediate with substrate. A pyruvate-binding site is contributed by Val205.

Belongs to the DapA family. In terms of assembly, homotetramer; dimer of dimers.

It is found in the cytoplasm. It catalyses the reaction L-aspartate 4-semialdehyde + pyruvate = (2S,4S)-4-hydroxy-2,3,4,5-tetrahydrodipicolinate + H2O + H(+). Its pathway is amino-acid biosynthesis; L-lysine biosynthesis via DAP pathway; (S)-tetrahydrodipicolinate from L-aspartate: step 3/4. Catalyzes the condensation of (S)-aspartate-beta-semialdehyde [(S)-ASA] and pyruvate to 4-hydroxy-tetrahydrodipicolinate (HTPA). The sequence is that of 4-hydroxy-tetrahydrodipicolinate synthase from Rickettsia bellii (strain OSU 85-389).